Consider the following 850-residue polypeptide: Trimethylamine-N-oxide reductase (850 aa).

Positions 1 to 39 form a signal peptide, tat-type signal; that stretch reads MKNKDSLHVSRRRFLAQLGGLTVAGMLGPSLLTPRSARA. S191 lines the Mo-bis(molybdopterin guanine dinucleotide) pocket.

Belongs to the prokaryotic molybdopterin-containing oxidoreductase family. Requires Mo-bis(molybdopterin guanine dinucleotide) as cofactor. Post-translationally, predicted to be exported by the Tat system. The position of the signal peptide cleavage has not been experimentally proven.

It localises to the periplasm. It carries out the reaction trimethylamine + 2 Fe(III)-[cytochrome c] + H2O = trimethylamine N-oxide + 2 Fe(II)-[cytochrome c] + 3 H(+). In terms of biological role, reduces trimethylamine-N-oxide (TMAO) into trimethylamine; an anaerobic reaction coupled to energy-yielding reactions. The chain is Trimethylamine-N-oxide reductase (torA) from Salmonella typhimurium (strain LT2 / SGSC1412 / ATCC 700720).